The chain runs to 304 residues: Glycine--tRNA ligase alpha subunit (304 aa).

The protein belongs to the class-II aminoacyl-tRNA synthetase family. In terms of assembly, tetramer of two alpha and two beta subunits.

Its subcellular location is the cytoplasm. The enzyme catalyses tRNA(Gly) + glycine + ATP = glycyl-tRNA(Gly) + AMP + diphosphate. The chain is Glycine--tRNA ligase alpha subunit from Afipia carboxidovorans (strain ATCC 49405 / DSM 1227 / KCTC 32145 / OM5) (Oligotropha carboxidovorans).